We begin with the raw amino-acid sequence, 233 residues long: Ribonuclease 3 (233 aa).

An RNase III domain is found at 4–126 (LNKLMERLGH…IVGAIYIDAG (123 aa)). Glu-39 contributes to the Mg(2+) binding site. Residue Asp-43 is part of the active site. 2 residues coordinate Mg(2+): Asp-112 and Glu-115. Residue Glu-115 is part of the active site. The DRBM domain occupies 153–222 (DAKSLLQEWL…AKRFLELLDD (70 aa)).

The protein belongs to the ribonuclease III family. As to quaternary structure, homodimer. Mg(2+) is required as a cofactor.

The protein resides in the cytoplasm. It carries out the reaction Endonucleolytic cleavage to 5'-phosphomonoester.. Its function is as follows. Digests double-stranded RNA. Involved in the processing of primary rRNA transcript to yield the immediate precursors to the large and small rRNAs (23S and 16S). Processes some mRNAs, and tRNAs when they are encoded in the rRNA operon. Processes pre-crRNA and tracrRNA of type II CRISPR loci if present in the organism. This is Ribonuclease 3 from Coxiella burnetii (strain CbuK_Q154) (Coxiella burnetii (strain Q154)).